The chain runs to 125 residues: Ribonuclease P protein component (125 aa).

The protein belongs to the RnpA family. Consists of a catalytic RNA component (M1 or rnpB) and a protein subunit.

The catalysed reaction is Endonucleolytic cleavage of RNA, removing 5'-extranucleotides from tRNA precursor.. Its function is as follows. RNaseP catalyzes the removal of the 5'-leader sequence from pre-tRNA to produce the mature 5'-terminus. It can also cleave other RNA substrates such as 4.5S RNA. The protein component plays an auxiliary but essential role in vivo by binding to the 5'-leader sequence and broadening the substrate specificity of the ribozyme. This chain is Ribonuclease P protein component, found in Clostridium botulinum (strain Alaska E43 / Type E3).